A 329-amino-acid polypeptide reads, in one-letter code: Mas-related G-protein coupled receptor member X2 (329 aa).

Topologically, residues 1–33 are extracellular; that stretch reads MDPTTPAWGTESTTMNGNDQALPLFCGKETLIS. A helical membrane pass occupies residues 34–54; the sequence is VFLILFIALVGLVGNGFVLWL. Over 55-63 the chain is Cytoplasmic; that stretch reads LGFRMRKNA. A helical transmembrane segment spans residues 64-84; the sequence is FSVYVLSLAGADFLFLCFQII. The Extracellular segment spans residues 85–96; sequence NCLVYLSNVFCS. Residues 97 to 117 form a helical membrane-spanning segment; it reads ISINFPSFFITVMTCAYLAGL. The Cytoplasmic portion of the chain corresponds to 118-144; sequence SMLSTISTERCLSVLWPIWYRCRRPRH. The chain crosses the membrane as a helical span at residues 145–165; that stretch reads LSAVACVLLWALSLLLSILEG. The Extracellular portion of the chain corresponds to 166–183; it reads KFCGLFGDGDSGWCQTFD. A helical transmembrane segment spans residues 184–204; the sequence is LITAAWLIFLFMVLCGSSLAL. At 205–227 the chain is on the cytoplasmic side; the sequence is LVRILCGSRGLPLTRLYLTILLT. The chain crosses the membrane as a helical span at residues 228-248; sequence VLVFLLCGLPFGIQWFLILWI. Residues 249-263 lie on the Extracellular side of the membrane; that stretch reads WKNSDVLFCHIHPVS. Residues 264–284 traverse the membrane as a helical segment; sequence VVLSSLNSSANPIIYFFVGSF. Topologically, residues 285 to 329 are cytoplasmic; sequence RKQWRLQQPILKLALQRALQDIAEVDHSEGCFRQGTPEMSRSSLV.

Belongs to the G-protein coupled receptor 1 family. Mas subfamily.

Its subcellular location is the cell membrane. Its function is as follows. Mast cell-specific receptor for basic secretagogues, i.e. cationic amphiphilic drugs, as well as endo- or exogenous peptides, consisting of a basic head group and a hydrophobic core. Recognizes and binds small molecules containing a cyclized tetrahydroisoquinoline (THIQ), such as non-steroidal neuromuscular blocking drugs (NMBDs), including tubocurarine and atracurium. In response to these compounds, mediates pseudo-allergic reactions characterized by histamine release, inflammation and airway contraction. This is Mas-related G-protein coupled receptor member X2 (MRGPRX2) from Pan troglodytes (Chimpanzee).